A 209-amino-acid chain; its full sequence is Guanylate kinase (209 aa).

The 180-residue stretch at 9–188 (GIMLVISSPS…SVYQIKCIFT (180 aa)) folds into the Guanylate kinase-like domain. 16–23 (SPSGGGKT) is an ATP binding site.

Belongs to the guanylate kinase family.

The protein resides in the cytoplasm. The catalysed reaction is GMP + ATP = GDP + ADP. Essential for recycling GMP and indirectly, cGMP. This chain is Guanylate kinase, found in Ehrlichia chaffeensis (strain ATCC CRL-10679 / Arkansas).